The chain runs to 374 residues: MAKSDYYEILGVSRDAEEREIKKAYKRQAMKFHPDRNRGNAEAEAKFKEIKEAYEVLTDAQKRAAYDQYGHAAFEQGGMGGGGASGADFSDIFGDVFGDIFGGGRRQRVSRGADLRYNMELSLEEAVRGVTREIRIPTLEECDVCHGSGAKPGTSAVTCPTCHGQGQVQMRQGFFAIQQTCPTCQGQGKIIKDPCTKCHGHGRVEKSKTLSVKIPAGVDTGDRIRLSGEGEVGEHGAAAGDLYVQVQVCKHPIFEREENNLYCEVPINFAMAALGGEIEVPTLDGRVKLKVPAETQTGKLFRMRGKGVKSVRGGSQGDLLCRVVVETPVKLNERQKQLLRELEESFGGPSGDQNSPRSKSFLDGVKKFFDDLTR.

A J domain is found at 5-70 (DYYEILGVSR…QKRAAYDQYG (66 aa)). Residues 129-207 (GVTREIRIPT…CHGHGRVEKS (79 aa)) form a CR-type zinc finger. Positions 142, 145, 159, 162, 181, 184, 195, and 198 each coordinate Zn(2+). CXXCXGXG motif repeat units lie at residues 142–149 (CDVCHGSG), 159–166 (CPTCHGQG), 181–188 (CPTCQGQG), and 195–202 (CTKCHGHG).

It belongs to the DnaJ family. Homodimer. Zn(2+) serves as cofactor.

Its subcellular location is the cytoplasm. In terms of biological role, participates actively in the response to hyperosmotic and heat shock by preventing the aggregation of stress-denatured proteins and by disaggregating proteins, also in an autonomous, DnaK-independent fashion. Unfolded proteins bind initially to DnaJ; upon interaction with the DnaJ-bound protein, DnaK hydrolyzes its bound ATP, resulting in the formation of a stable complex. GrpE releases ADP from DnaK; ATP binding to DnaK triggers the release of the substrate protein, thus completing the reaction cycle. Several rounds of ATP-dependent interactions between DnaJ, DnaK and GrpE are required for fully efficient folding. Also involved, together with DnaK and GrpE, in the DNA replication of plasmids through activation of initiation proteins. The sequence is that of Chaperone protein DnaJ from Sodalis glossinidius (strain morsitans).